A 485-amino-acid chain; its full sequence is Ribulose bisphosphate carboxylase large chain (485 aa).

2 residues coordinate substrate: N124 and T174. K176 functions as the Proton acceptor in the catalytic mechanism. K178 is a binding site for substrate. K202, D204, and E205 together coordinate Mg(2+). K202 bears the N6-carboxylysine mark. Residue H294 is the Proton acceptor of the active site. R295, H327, and S379 together coordinate substrate.

Belongs to the RuBisCO large chain family. Type I subfamily. As to quaternary structure, heterohexadecamer of 8 large chains and 8 small chains. It depends on Mg(2+) as a cofactor.

The enzyme catalyses 2 (2R)-3-phosphoglycerate + 2 H(+) = D-ribulose 1,5-bisphosphate + CO2 + H2O. It catalyses the reaction D-ribulose 1,5-bisphosphate + O2 = 2-phosphoglycolate + (2R)-3-phosphoglycerate + 2 H(+). RuBisCO catalyzes two reactions: the carboxylation of D-ribulose 1,5-bisphosphate, the primary event in carbon dioxide fixation, as well as the oxidative fragmentation of the pentose substrate. Both reactions occur simultaneously and in competition at the same active site. This Rhodopseudomonas palustris (strain BisA53) protein is Ribulose bisphosphate carboxylase large chain.